Here is a 530-residue protein sequence, read N- to C-terminus: Light-harvesting complex I LH38 proteins (530 aa).

It is found in the plastid. The protein localises to the chloroplast. The sequence is that of Light-harvesting complex I LH38 proteins from Euglena gracilis.